Consider the following 116-residue polypeptide: Large ribosomal subunit protein bL20 (116 aa).

The protein belongs to the bacterial ribosomal protein bL20 family.

Its function is as follows. Binds directly to 23S ribosomal RNA and is necessary for the in vitro assembly process of the 50S ribosomal subunit. It is not involved in the protein synthesizing functions of that subunit. This is Large ribosomal subunit protein bL20 (rplT) from Mycoplasmopsis fermentans (Mycoplasma fermentans).